We begin with the raw amino-acid sequence, 249 residues long: Isoprenyl transferase (249 aa).

D25 is a catalytic residue. D25 is a Mg(2+) binding site. Residues 26-29 (GNGR), W30, R38, H42, and 70-72 (STE) each bind substrate. N73 acts as the Proton acceptor in catalysis. Substrate-binding positions include W74, R76, R197, and 203–205 (RLS). E216 contacts Mg(2+).

This sequence belongs to the UPP synthase family. As to quaternary structure, homodimer. Mg(2+) is required as a cofactor.

Functionally, catalyzes the condensation of isopentenyl diphosphate (IPP) with allylic pyrophosphates generating different type of terpenoids. This chain is Isoprenyl transferase, found in Streptococcus pyogenes serotype M3 (strain ATCC BAA-595 / MGAS315).